The sequence spans 495 residues: UDP-glycosyltransferase 73C5 (495 aa).

Residues 146 to 162 traverse the membrane as a helical segment; the sequence is ILFHGMGCFCLLCMHVL. UDP-alpha-D-glucose-binding positions include serine 296, 356-358, 373-381, and 395-398; these read SPQ, HCGWNSTLE, and FADQ. A disordered region spans residues 446–477; the sequence is MGESDDAKERRRRAKELGDSAHKAVEEGGSSH. Basic and acidic residues predominate over residues 450 to 471; the sequence is DDAKERRRRAKELGDSAHKAVE.

The protein belongs to the UDP-glycosyltransferase family. Elongating hypocotyls and root-specific. Expressed in the vascular system, in meristematic tissues of the root tip, and in the vasculature of the hypocotyl right after germination. In late stage of flower development, expressed in petals, and in abscission zones.

It localises to the membrane. Specifically catalyzes 23-O-glucosylation of brassinosteroids, resulting probably in their inactivation. Also, involved in the O-glucosylation of trans-zeatin and dihydrozeatin. Active in vitro on cis-zeatin, dihydrozeatin-9-N-Glc, and olomoucine. Also involved in the detoxification of the Fusarium mycotoxin deoxynivalenol by the transfer of glucose from UDP-glucose to the hydroxyl group at C-3. Possesses low quercetin 7-O-glucosyltransferase and 4'-O-glucosyltransferase activities in vitro. The protein is UDP-glycosyltransferase 73C5 (UGT73C5) of Arabidopsis thaliana (Mouse-ear cress).